A 449-amino-acid polypeptide reads, in one-letter code: tRNA-2-methylthio-N(6)-dimethylallyladenosine synthase (449 aa).

An MTTase N-terminal domain is found at 3–118 (KKVFVKTFGC…LPELLAQREA (116 aa)). The [4Fe-4S] cluster site is built by C12, C49, C81, C155, C159, and C162. The region spanning 141–376 (RVEGASAFVS…VINANIKSIS (236 aa)) is the Radical SAM core domain. The TRAM domain occupies 377–440 (ESRVGTVQRI…AYTLRGEVVT (64 aa)).

This sequence belongs to the methylthiotransferase family. MiaB subfamily. In terms of assembly, monomer. Requires [4Fe-4S] cluster as cofactor.

Its subcellular location is the cytoplasm. It catalyses the reaction N(6)-dimethylallyladenosine(37) in tRNA + (sulfur carrier)-SH + AH2 + 2 S-adenosyl-L-methionine = 2-methylsulfanyl-N(6)-dimethylallyladenosine(37) in tRNA + (sulfur carrier)-H + 5'-deoxyadenosine + L-methionine + A + S-adenosyl-L-homocysteine + 2 H(+). Functionally, catalyzes the methylthiolation of N6-(dimethylallyl)adenosine (i(6)A), leading to the formation of 2-methylthio-N6-(dimethylallyl)adenosine (ms(2)i(6)A) at position 37 in tRNAs that read codons beginning with uridine. The protein is tRNA-2-methylthio-N(6)-dimethylallyladenosine synthase of Paracidovorax citrulli (strain AAC00-1) (Acidovorax citrulli).